The sequence spans 308 residues: Putative integrase/recombinase y4qK (308 aa).

The Core-binding (CB) domain maps to leucine 15–leucine 97. The region spanning lysine 115–serine 288 is the Tyr recombinase domain. Catalysis depends on residues arginine 150, lysine 175, histidine 240, arginine 243, and histidine 266. The active-site O-(3'-phospho-DNA)-tyrosine intermediate is tyrosine 275.

The protein belongs to the 'phage' integrase family.

Functionally, may function as an integrase. This is Putative integrase/recombinase y4qK from Sinorhizobium fredii (strain NBRC 101917 / NGR234).